Consider the following 490-residue polypeptide: GTPase Der (490 aa).

2 consecutive EngA-type G domains span residues 3-166 (PVVA…MDDV) and 203-376 (IKLA…DSST). GTP-binding positions include 9-16 (GRPNVGKS), 56-60 (DTGGI), 118-121 (NKTD), 209-216 (GRPNVGKS), 256-260 (DTAGV), and 321-324 (NKWD). Residues 377–461 (RRVSTAMLTR…PIRIQFKEGE (85 aa)) enclose the KH-like domain.

It belongs to the TRAFAC class TrmE-Era-EngA-EngB-Septin-like GTPase superfamily. EngA (Der) GTPase family. In terms of assembly, associates with the 50S ribosomal subunit.

Its function is as follows. GTPase that plays an essential role in the late steps of ribosome biogenesis. In Salmonella choleraesuis (strain SC-B67), this protein is GTPase Der.